A 70-amino-acid chain; its full sequence is Mu-conotoxin PnIVB (70 aa).

A signal peptide spans 1–20 (MMSKLGVLLIICLLLCPLTA). A propeptide spanning residues 21 to 51 (VPQDGDQPADQPAERMQDDISSEHHPFFDPV) is cleaved from the precursor.

Contains 3 disulfide bonds. They are not added, since framework IV presents two different connectivities (I-V, II-III, IV-VI and I-III, II-V, IV-VI). In terms of tissue distribution, expressed by the venom duct.

It localises to the secreted. Mu-conotoxins block voltage-gated sodium channels (Nav). Blocks reversibly sodium channels in molluskan neurons, but has no effect on sodium currents in bovine chromaffin cells or in rat brain synaptosomes. Induces paralysis in bivalve mollusks (Mytilus). No effect are observed on fish (Gambusia) and fly larvae (Sarcophaga). Is approximately 6 times more potent than PnIVA in blockade of the sodium current in Lymnaea neurons. The chain is Mu-conotoxin PnIVB from Conus pennaceus (Feathered cone).